The following is a 577-amino-acid chain: Optineurin (577 aa).

2 disordered regions span residues 1–32 (MSHQ…HPNL) and 101–143 (SHEN…KDQL). The stretch at 38-170 (EELLQQMKEL…VSELQLKLNS (133 aa)) forms a coiled coil. Residues 58–209 (MKLNNQAMKG…GPTRTVSTGT (152 aa)) form an interaction with Rab8 region. An LIR motif is present at residues 176 to 181 (DSFVEI). The residue at position 177 (Ser-177) is a Phosphoserine; by TBK1. Basic and acidic residues predominate over residues 186 to 197 (GEAEGSVKEIKH). Disordered stretches follow at residues 186–209 (GEAE…STGT) and 261–297 (VSDF…TVGS). Residue Ser-198 is modified to Phosphoserine. Positions 239–508 (CLREGNQKVE…LLKENDAFED (270 aa)) form a coiled coil. 2 stretches are compositionally biased toward basic and acidic residues: residues 261 to 274 (VSDF…RSEI) and 281 to 292 (STEKENDEEKGP). Ser-342 carries the post-translational modification Phosphoserine. Residues 411–577 (TRKESEKVDR…LQIHVMDCII (167 aa)) are interaction with HD. The tract at residues 412–520 (RKESEKVDRA…RQSLMEMQSR (109 aa)) is interaction with MYO6. The short motif at 474–479 (DFHAER) is the UBAN element. Ser-526 carries the post-translational modification Phosphoserine. The segment at 547–577 (QRNIPIHSCPKCGEVLPDIDTLQIHVMDCII) adopts a CCHC NOA-type zinc-finger fold. Zn(2+) contacts are provided by Cys-555, Cys-558, His-571, and Cys-575.

As to quaternary structure, self-associates. Interacts with HD. Interacts with GTF3A. Interacts with MYO6. Interacts (via UBAN) with ubiquitinated TFRC. Interacts with GTP-bound Rab8 (RAB8A and/or RAB8B). Interacts with TBC1D17. Interacts with TBK1. Interacts with TRAF3. Binds to linear ubiquitin chains. Interacts with LC3 family members MAP1LC3A, MAP1LC3B, GABARAP, GABARAPL1 and GABARAPL2; OPTN phosphorylation increases the association (at least with MAP1LC3B). Interacts with RAB12; the interaction may be indirect. Interacts with TBK1; this interaction leads to the Golgi localization of TBK1 and its subsequent activation. Interacts with palmitoyltransferase ZDHHC17/HIP14; the interaction does not lead to palmitoylation of OPTN. Interacts with CYLD. Interacts with TOM1; the interaction is indirect and is mediated by MYO6, which acts as a bridge between TOM1 and OPTN. Interacts with USP12; the interaction is independent of USP12 deubiquitinase activity and may be involved in regulation of autophagic flux. (Microbial infection) Interacts with E3 14.7 kDa protein of group C human adenovirus. Interacts with Bluetongue virus protein NS3. Post-translationally, phosphorylated by TBK1, leading to restrict bacterial proliferation in case of infection. Phosphorylation is induced by phorbol esters and decreases its half-time. Present in aqueous humor of the eye (at protein level). Expressed in the trabecular meshwork (at protein level). Expressed in nonpigmented ciliary epithelium (at protein level). Expressed at high levels in skeletal muscle, also detected in heart, brain, pancreas, kidney, placenta and liver. Expressed in dermal fibroblasts (at protein level).

The protein resides in the cytoplasm. It localises to the perinuclear region. The protein localises to the golgi apparatus. It is found in the trans-Golgi network. Its subcellular location is the cytoplasmic vesicle. The protein resides in the autophagosome. It localises to the recycling endosome. In terms of biological role, plays an important role in the maintenance of the Golgi complex, in membrane trafficking, in exocytosis, through its interaction with myosin VI and Rab8. Links myosin VI to the Golgi complex and plays an important role in Golgi ribbon formation. Plays a role in the activation of innate immune response during viral infection. Mechanistically, recruits TBK1 at the Golgi apparatus, promoting its trans-phosphorylation after RLR or TLR3 stimulation. In turn, activated TBK1 phosphorylates its downstream partner IRF3 to produce IFN-beta/IFNB1. Plays a neuroprotective role in the eye and optic nerve. May act by regulating membrane trafficking and cellular morphogenesis via a complex that contains Rab8 and huntingtin (HD). Mediates the interaction of Rab8 with the probable GTPase-activating protein TBC1D17 during Rab8-mediated endocytic trafficking, such as that of transferrin receptor (TFRC/TfR); regulates Rab8 recruitment to tubules emanating from the endocytic recycling compartment. Autophagy receptor that interacts directly with both the cargo to become degraded and an autophagy modifier of the MAP1 LC3 family; targets ubiquitin-coated bacteria (xenophagy), such as cytoplasmic Salmonella enterica, and appears to function in the same pathway as SQSTM1 and CALCOCO2/NDP52. Its function is as follows. (Microbial infection) May constitute a cellular target for various viruses, such as adenovirus E3 14.7 or Bluetongue virus, to inhibit innate immune response. During RNA virus infection, such as that of Sendai virus, negatively regulates the induction of IFNB1. This chain is Optineurin (OPTN), found in Homo sapiens (Human).